The sequence spans 782 residues: DNA repair and recombination protein RAD54-like (782 aa).

A compositionally biased stretch (polar residues) spans 1–20 (MRRSLAPSQRGGQRLSSRND). Residues 1–28 (MRRSLAPSQRGGQRLSSRNDFTPPLLKK) form a disordered region. Residues 2–9 (RRSLAPSQ) are required for chromatin remodeling, strand pairing activities and coupling of ATPase activity. The residue at position 22 (threonine 22) is a Phosphothreonine. Positions 168-343 (EGKRGNFNGC…FSLVNFVNPE (176 aa)) constitute a Helicase ATP-binding domain. An ATP-binding site is contributed by 181 to 188 (DEMGLGKT). Residues 294–297 (DEGH) carry the DEGH box motif. The Helicase C-terminal domain maps to 501 to 658 (LLDFMLAAIR…NNESAEKHFT (158 aa)). Polar residues predominate over residues 741–753 (SQKIETTPATETS). The interval 741–782 (SQKIETTPATETSVEAKPEPERRKRPAMPLSDDSADEDFQGF) is disordered. Residues 773-782 (DSADEDFQGF) show a composition bias toward acidic residues.

It belongs to the SNF2/RAD54 helicase family. As to quaternary structure, interacts (via N-terminus) with spn-A/Rad51.

It localises to the nucleus. In terms of biological role, involved in mitotic DNA repair and meiotic recombination. Functions in the recombinational DNA repair pathway. Essential for interhomolog gene conversion (GC), but may have a less important role in intersister GC than spn-A/Rad51. In the presence of DNA, spn-A/Rad51 enhances the ATPase activity of okr/Rad54. In Drosophila pseudoobscura pseudoobscura (Fruit fly), this protein is DNA repair and recombination protein RAD54-like.